Here is a 146-residue protein sequence, read N- to C-terminus: Large ribosomal subunit protein uL15 (146 aa).

Residues 1–10 (MTIKLHDLKP) are compositionally biased toward basic and acidic residues. Residues 1–52 (MTIKLHDLKPARGSKTPRTRVGRGEGSKGKTAGRGTKGTKARKNVPVTFEGG) are disordered.

Belongs to the universal ribosomal protein uL15 family. In terms of assembly, part of the 50S ribosomal subunit.

In terms of biological role, binds to the 23S rRNA. The polypeptide is Large ribosomal subunit protein uL15 (Mycolicibacterium paratuberculosis (strain ATCC BAA-968 / K-10) (Mycobacterium paratuberculosis)).